A 341-amino-acid chain; its full sequence is Glyceraldehyde-3-phosphate dehydrogenase 3.1 (341 aa).

Residues 13–14 (RI), D35, and R85 contribute to the NAD(+) site. Residues 157–159 (SCT), T188, 217–218 (TG), and R240 contribute to the D-glyceraldehyde 3-phosphate site. C158 (nucleophile) is an active-site residue. N322 is a binding site for NAD(+).

Belongs to the glyceraldehyde-3-phosphate dehydrogenase family. In terms of assembly, homotetramer.

It localises to the cytoplasm. The enzyme catalyses D-glyceraldehyde 3-phosphate + phosphate + NAD(+) = (2R)-3-phospho-glyceroyl phosphate + NADH + H(+). Its pathway is carbohydrate degradation; glycolysis; pyruvate from D-glyceraldehyde 3-phosphate: step 1/5. This Caenorhabditis briggsae protein is Glyceraldehyde-3-phosphate dehydrogenase 3.1.